The primary structure comprises 394 residues: Choline/ethanolamine kinase (394 aa).

Residue A2 is modified to N-acetylalanine. The segment at 22 to 42 (GLLDAKCPEPIPNRRRSSSLS) is disordered. Residues 75 to 81 (SGGLSNL), R104, 146 to 152 (QYLPSRP), Q244, and D264 contribute to the ATP site. A substrate-binding site is contributed by 77–79 (GLS).

Belongs to the choline/ethanolamine kinase family. In terms of assembly, homodimer, and heterodimer with CHKA.

The catalysed reaction is choline + ATP = phosphocholine + ADP + H(+). It carries out the reaction ethanolamine + ATP = phosphoethanolamine + ADP + H(+). It participates in phospholipid metabolism; phosphatidylethanolamine biosynthesis; phosphatidylethanolamine from ethanolamine: step 1/3. Functionally, has a key role in phospholipid metabolism, and catalyzes the first step of phosphatidylethanolamine and phosphatidylcholine biosynthesis. The polypeptide is Choline/ethanolamine kinase (Chkb) (Rattus norvegicus (Rat)).